A 723-amino-acid chain; its full sequence is ESX-1 secretion-associated protein EspK (723 aa).

2 disordered regions span residues 175–360 (DLLQ…TPAA) and 393–451 (SGAG…GTPV). A compositionally biased stretch (low complexity) spans 200–209 (TPGTPITPGT). The segment covering 210-229 (PITPIPGAPVTPITPTPGTP) has biased composition (pro residues). Positions 230-249 (VTPVTPGKPVTPVTPVKPGT) are enriched in low complexity. 2 stretches are compositionally biased toward pro residues: residues 250-265 (PGEP…PVAP) and 274-308 (PVTP…PSGP). Composition is skewed to low complexity over residues 309 to 319 (ATPGTPGGEPA), 393 to 404 (SGAGSHAATGRA), and 412 to 426 (AAAP…RTAP). A compositionally biased stretch (basic and acidic residues) spans 432 to 444 (STDHIDKPDRSES).

The protein localises to the cytoplasm. In terms of biological role, may act as a chaperone that facilitates EspB secretion through an interaction with EccCb1. This chain is ESX-1 secretion-associated protein EspK, found in Mycobacterium tuberculosis (strain CDC 1551 / Oshkosh).